The chain runs to 230 residues: Acyl-protein thioesterase 1 (230 aa).

Catalysis depends on charge relay system residues Ser-119, Asp-174, and His-208. Position 224 is an N6-acetyllysine (Lys-224).

Belongs to the AB hydrolase superfamily. AB hydrolase 2 family. As to quaternary structure, homodimer. Platelets.

It is found in the cytoplasm. The protein localises to the cell membrane. It localises to the nucleus membrane. Its subcellular location is the endoplasmic reticulum. The catalysed reaction is S-hexadecanoyl-L-cysteinyl-[protein] + H2O = L-cysteinyl-[protein] + hexadecanoate + H(+). It catalyses the reaction 1-hexadecanoyl-sn-glycero-3-phosphocholine + H2O = sn-glycerol 3-phosphocholine + hexadecanoate + H(+). It carries out the reaction a 1-(9Z-octadecenoyl)-2-acyl-sn-glycero-3-phosphocholine + H2O = a 2-acyl-sn-glycero-3-phosphocholine + (9Z)-octadecenoate + H(+). Inhibited by palmostatin-B, leading to impair depalmitoylating of Ras. Acts as an acyl-protein thioesterase. Hydrolyzes fatty acids from S-acylated cysteine residues in proteins such as trimeric G alpha proteins or HRAS. Acts as a palmitoyl thioesterase that catalyzes depalmitoylation of proteins, such as ADRB2, KCNMA1 and SQSTM1. Acts as a negative regulator of autophagy by mediating palmitoylation of SQSTM1, decreasing affinity between SQSTM1 and ATG8 proteins and recruitment of ubiquitinated cargo proteins to autophagosomes. Acts as a lysophospholipase and hydrolyzes lysophosphatidylcholine (lyso-PC). Also hydrolyzes lysophosphatidylethanolamine (lyso-PE), lysophosphatidylinositol (lyso-PI) and lysophosphatidylserine (lyso-PS). Has much higher thioesterase activity than lysophospholipase activity. Contributes to the production of lysophosphatidic acid (LPA) during blood coagulation by recognizing and cleaving plasma phospholipids to generate lysophospholipids which in turn act as substrates for ENPP2 to produce LPA. This chain is Acyl-protein thioesterase 1 (LYPLA1), found in Homo sapiens (Human).